A 446-amino-acid chain; its full sequence is Probable glycine dehydrogenase (decarboxylating) subunit 1 (446 aa).

It belongs to the GcvP family. N-terminal subunit subfamily. The glycine cleavage system is composed of four proteins: P, T, L and H. In this organism, the P 'protein' is a heterodimer of two subunits.

The enzyme catalyses N(6)-[(R)-lipoyl]-L-lysyl-[glycine-cleavage complex H protein] + glycine + H(+) = N(6)-[(R)-S(8)-aminomethyldihydrolipoyl]-L-lysyl-[glycine-cleavage complex H protein] + CO2. The glycine cleavage system catalyzes the degradation of glycine. The P protein binds the alpha-amino group of glycine through its pyridoxal phosphate cofactor; CO(2) is released and the remaining methylamine moiety is then transferred to the lipoamide cofactor of the H protein. The protein is Probable glycine dehydrogenase (decarboxylating) subunit 1 of Desulfitobacterium hafniense (strain DSM 10664 / DCB-2).